The chain runs to 545 residues: T-complex protein 1 subunit gamma (545 aa).

Residue methionine 1 is modified to N-acetylmethionine. A disordered region spans residues 1–24 (MMGHRPVLVLSQNTKRESGRKVQS). Serine 11 is subject to Phosphoserine. Lysine 15 participates in a covalent cross-link: Glycyl lysine isopeptide (Lys-Gly) (interchain with G-Cter in SUMO2). Glycine 42 is a binding site for ADP. Glycine 42 is an ATP binding site. Aspartate 93 lines the Mg(2+) pocket. Positions 94, 95, 96, 97, 162, and 163 each coordinate ADP. ATP is bound by residues glycine 94, threonine 95, and threonine 96. At serine 170 the chain carries Phosphoserine. The residue at position 222 (lysine 222) is an N6-acetyllysine. Phosphoserine is present on residues serine 243 and serine 244. The residue at position 247 (tyrosine 247) is a Phosphotyrosine. Glycyl lysine isopeptide (Lys-Gly) (interchain with G-Cter in SUMO2) cross-links involve residues lysine 248 and lysine 249. Serine 252 carries the phosphoserine modification. The cysteines at positions 366 and 372 are disulfide-linked. A Glycyl lysine isopeptide (Lys-Gly) (interchain with G-Cter in SUMO2) cross-link involves residue lysine 381. Glycine 411 provides a ligand contact to ADP. Glycine 411 contributes to the ATP binding site. Residues threonine 430 and threonine 459 each carry the phosphothreonine modification. Residues glycine 482, glutamate 483, glutamate 497, and lysine 502 each contribute to the ADP site. Glycine 482 provides a ligand contact to ATP. ATP is bound at residue glutamate 497. A disordered region spans residues 526 to 545 (HKKKGDDQNRQTGAPDAGQE).

Belongs to the TCP-1 chaperonin family. In terms of assembly, component of the chaperonin-containing T-complex (TRiC), a hexadecamer composed of two identical back-to-back stacked rings enclosing a protein folding chamber. Each ring is made up of eight different subunits: TCP1/CCT1, CCT2, CCT3, CCT4, CCT5, CCT6A/CCT6, CCT7, CCT8. Interacts with PACRG. Interacts with DNAAF4. Interacts with DLEC1. In terms of processing, the N-terminus is blocked.

It localises to the cytoplasm. The catalysed reaction is ATP + H2O = ADP + phosphate + H(+). Its function is as follows. Component of the chaperonin-containing T-complex (TRiC), a molecular chaperone complex that assists the folding of actin, tubulin and other proteins upon ATP hydrolysis. The TRiC complex mediates the folding of WRAP53/TCAB1, thereby regulating telomere maintenance. As part of the TRiC complex may play a role in the assembly of BBSome, a complex involved in ciliogenesis regulating transports vesicles to the cilia. In Mus musculus (Mouse), this protein is T-complex protein 1 subunit gamma (Cct3).